Reading from the N-terminus, the 221-residue chain is Flagellar L-ring protein 2 (221 aa).

Positions 1–16 (MKRFLILTPMVLALCG) are cleaved as a signal peptide. A lipid anchor (N-palmitoyl cysteine) is attached at C17. Residue C17 is the site of S-diacylglycerol cysteine attachment.

Belongs to the FlgH family. The basal body constitutes a major portion of the flagellar organelle and consists of four rings (L,P,S, and M) mounted on a central rod.

The protein resides in the cell outer membrane. Its subcellular location is the bacterial flagellum basal body. In terms of biological role, assembles around the rod to form the L-ring and probably protects the motor/basal body from shearing forces during rotation. The protein is Flagellar L-ring protein 2 of Yersinia pseudotuberculosis serotype I (strain IP32953).